The primary structure comprises 92 residues: Small ribosomal subunit protein uS19 (92 aa).

It belongs to the universal ribosomal protein uS19 family.

In terms of biological role, protein S19 forms a complex with S13 that binds strongly to the 16S ribosomal RNA. The chain is Small ribosomal subunit protein uS19 from Streptococcus thermophilus (strain ATCC BAA-491 / LMD-9).